The following is a 707-amino-acid chain: Protein kinase C theta type (707 aa).

The C2 domain occupies M1–L107. Residue Y90 is modified to Phosphotyrosine; by LCK. The segment at C159–C209 adopts a Phorbol-ester/DAG-type 1 zinc-finger fold. The residue at position 219 (T219) is a Phosphothreonine; by autocatalysis. The Phorbol-ester/DAG-type 2 zinc finger occupies P231–C281. The disordered stretch occupies residues E327–S365. The residue at position 348 (S348) is a Phosphoserine. A Protein kinase domain is found at F380 to F634. ATP contacts are provided by residues L386–V394 and K409. D504 (proton acceptor) is an active-site residue. Position 538 is a phosphothreonine; by PDPK1 (T538). In terms of domain architecture, AGC-kinase C-terminal spans R635 to C706. Residue S676 is modified to Phosphoserine; by autocatalysis. A Phosphoserine modification is found at S685. S695 carries the post-translational modification Phosphoserine; by autocatalysis.

It belongs to the protein kinase superfamily. AGC Ser/Thr protein kinase family. PKC subfamily. As to quaternary structure, part of a membrane raft complex composed at least of BCL10, CARD11, MALT1 and IKBKB. Interacts with GLRX3 (via N-terminus). Interacts with ECT2. Interacts with CCDC88A/GIV; the interaction leads to phosphorylation of CCDC88A and inhibition of its guanine nucleotide exchange factor activity. Interacts with CD28. It depends on Mg(2+) as a cofactor. Autophosphorylation at Thr-219 is required for targeting to the TCR and cellular function of PRKCQ upon antigen receptor ligation. Following TCR stimulation, phosphorylated at Tyr-90 and Ser-685. In terms of tissue distribution, T-lymphocytes and skeletal muscle.

The protein localises to the cytoplasm. It is found in the cell membrane. The enzyme catalyses L-seryl-[protein] + ATP = O-phospho-L-seryl-[protein] + ADP + H(+). The catalysed reaction is L-threonyl-[protein] + ATP = O-phospho-L-threonyl-[protein] + ADP + H(+). With respect to regulation, novel PKCs (PRKCD, PRKCE, PRKCH and PRKCQ) are calcium-insensitive, but activated by diacylglycerol (DAG) and phosphatidylserine. Three specific sites; Thr-538 (activation loop of the kinase domain), Ser-676 (turn motif) and Ser-695 (hydrophobic region), need to be phosphorylated for its full activation. Functionally, calcium-independent, phospholipid- and diacylglycerol (DAG)-dependent serine/threonine-protein kinase that mediates non-redundant functions in T-cell receptor (TCR) signaling, including T-cells activation, proliferation, differentiation and survival, by mediating activation of multiple transcription factors such as NF-kappa-B, JUN, NFATC1 and NFATC2. In TCR-CD3/CD28-co-stimulated T-cells, is required for the activation of NF-kappa-B and JUN, which in turn are essential for IL2 production, and participates in the calcium-dependent NFATC1 and NFATC2 transactivation. Mediates the activation of the canonical NF-kappa-B pathway (NFKB1) by direct phosphorylation of CARD11 on several serine residues, inducing CARD11 association with lipid rafts and recruitment of the BCL10-MALT1 complex, which then activates IKK complex, resulting in nuclear translocation and activation of NFKB1. May also play an indirect role in activation of the non-canonical NF-kappa-B (NFKB2) pathway. In the signaling pathway leading to JUN activation, acts by phosphorylating the mediator STK39/SPAK and may not act through MAP kinases signaling. Plays a critical role in TCR/CD28-induced NFATC1 and NFATC2 transactivation by participating in the regulation of reduced inositol 1,4,5-trisphosphate generation and intracellular calcium mobilization. After costimulation of T-cells through CD28 can phosphorylate CBLB and is required for the ubiquitination and subsequent degradation of CBLB, which is a prerequisite for the activation of TCR. During T-cells differentiation, plays an important role in the development of T-helper 2 (Th2) cells following immune and inflammatory responses, and, in the development of inflammatory autoimmune diseases, is necessary for the activation of IL17-producing Th17 cells. May play a minor role in Th1 response. Upon TCR stimulation, mediates T-cell protective survival signal by phosphorylating BAD, thus protecting T-cells from BAD-induced apoptosis, and by up-regulating BCL-X(L)/BCL2L1 levels through NF-kappa-B and JUN pathways. In platelets, regulates signal transduction downstream of the ITGA2B, CD36/GP4, F2R/PAR1 and F2RL3/PAR4 receptors, playing a positive role in 'outside-in' signaling and granule secretion signal transduction. May relay signals from the activated ITGA2B receptor by regulating the uncoupling of WASP and WIPF1, thereby permitting the regulation of actin filament nucleation and branching activity of the Arp2/3 complex. May mediate inhibitory effects of free fatty acids on insulin signaling by phosphorylating IRS1, which in turn blocks IRS1 tyrosine phosphorylation and downstream activation of the PI3K/AKT pathway. Phosphorylates MSN (moesin) in the presence of phosphatidylglycerol or phosphatidylinositol. Phosphorylates PDPK1 at 'Ser-504' and 'Ser-532' and negatively regulates its ability to phosphorylate PKB/AKT1. Phosphorylates CCDC88A/GIV and inhibits its guanine nucleotide exchange factor activity. Phosphorylates and activates LRRK1, which phosphorylates RAB proteins involved in intracellular trafficking. This is Protein kinase C theta type (Prkcq) from Mus musculus (Mouse).